A 155-amino-acid polypeptide reads, in one-letter code: S-ribosylhomocysteine lyase (155 aa).

3 residues coordinate Fe cation: histidine 54, histidine 58, and cysteine 122.

This sequence belongs to the LuxS family. In terms of assembly, homodimer. Requires Fe cation as cofactor.

The enzyme catalyses S-(5-deoxy-D-ribos-5-yl)-L-homocysteine = (S)-4,5-dihydroxypentane-2,3-dione + L-homocysteine. Its function is as follows. Involved in the synthesis of autoinducer 2 (AI-2) which is secreted by bacteria and is used to communicate both the cell density and the metabolic potential of the environment. The regulation of gene expression in response to changes in cell density is called quorum sensing. Catalyzes the transformation of S-ribosylhomocysteine (RHC) to homocysteine (HC) and 4,5-dihydroxy-2,3-pentadione (DPD). The sequence is that of S-ribosylhomocysteine lyase from Deinococcus deserti (strain DSM 17065 / CIP 109153 / LMG 22923 / VCD115).